We begin with the raw amino-acid sequence, 68 residues long: MARITTEDCTGKISNHFDLTLVAARRARQLENGNTPLVDDARNNKPTVTALREIAAGHIGTELLTRNK.

The protein belongs to the RNA polymerase subunit omega family. As to quaternary structure, the RNAP catalytic core consists of 2 alpha, 1 beta, 1 beta' and 1 omega subunit. When a sigma factor is associated with the core the holoenzyme is formed, which can initiate transcription.

It catalyses the reaction RNA(n) + a ribonucleoside 5'-triphosphate = RNA(n+1) + diphosphate. Functionally, promotes RNA polymerase assembly. Latches the N- and C-terminal regions of the beta' subunit thereby facilitating its interaction with the beta and alpha subunits. The sequence is that of DNA-directed RNA polymerase subunit omega from Neisseria meningitidis serogroup C (strain 053442).